We begin with the raw amino-acid sequence, 406 residues long: Probable sphingosine-1-phosphate phosphatase (406 aa).

A run of 2 helical transmembrane segments spans residues 66–86 and 92–112; these read ILGE…CVAT and LCVV…TFTL. The tract at residues 107–115 is phosphatase sequence motif I; that stretch reads KNTFTLPRP. The phosphatase sequence motif II stretch occupies residues 133 to 136; it reads PSTH. The Proton donor role is filled by His136. The next 2 helical transmembrane spans lie at 138–158 and 162–182; these read ASAF…FPTI and FNIS…SVMF. Positions 183–194 are phosphatase sequence motif III; sequence SRLYNGHHTPMD. His190 serves as the catalytic Nucleophile. The next 5 membrane-spanning stretches (helical) occupy residues 193–213, 225–245, 254–274, 313–333, and 374–394; these read MDVI…TYQL, TFLF…FFHP, AYPE…SLWL, ILIG…FFFF, and LFVY…FYYL.

It belongs to the type 2 lipid phosphate phosphatase family.

It is found in the endoplasmic reticulum membrane. In terms of biological role, has enzymatic activity against both sphingosine 1 phosphate (S1P) and dihydro-S1P. Regulates intracellular and extracellular S1P levels. In Dictyostelium discoideum (Social amoeba), this protein is Probable sphingosine-1-phosphate phosphatase (sppA).